A 103-amino-acid polypeptide reads, in one-letter code: Histone H4 (103 aa).

Over residues 1–14 (MSGRGKGGKGLGKG) the composition is skewed to gly residues. A disordered region spans residues 1–20 (MSGRGKGGKGLGKGGAKRHR). At Ser2 the chain carries N-acetylserine. N6-acetyl-N6-methyllysine; alternate occurs at positions 6 and 13. N6-acetyllysine is present on Lys17. Residues 17 to 21 (KRHRR) mediate DNA binding.

This sequence belongs to the histone H4 family. As to quaternary structure, the nucleosome is a histone octamer containing two molecules each of H2A, H2B, H3 and H4 assembled in one H3-H4 heterotetramer and two H2A-H2B heterodimers. The octamer wraps approximately 147 bp of DNA.

It localises to the nucleus. Its subcellular location is the chromosome. Functionally, core component of nucleosome. Nucleosomes wrap and compact DNA into chromatin, limiting DNA accessibility to the cellular machineries which require DNA as a template. Histones thereby play a central role in transcription regulation, DNA repair, DNA replication and chromosomal stability. DNA accessibility is regulated via a complex set of post-translational modifications of histones, also called histone code, and nucleosome remodeling. The sequence is that of Histone H4 from Mytilus chilensis (Chilean blue mussel).